The primary structure comprises 512 residues: MSAMPTLVLHPGRVTLAELRAIAAGGQRLALDASALAGMRASQATVDRIALEEQVVYGINTGFGKLASTKIAHDRLAELQRNLVLSHSVGTGDPLPDGVVRMVLATKAVSLARGHSGVRPALVDALLALANADVLPVIPAKGSVGASGDLAPLAHLACVLIGEGAAQVGGRIVTGREAMAAVGLEPFVLGPKEGLALLNGTQVSTALALAGLFAAENVFAAGLVSGCLTLEAIKGSVKPFDARIHEARGQAGQIAVAAAVRALLEGSAIDPSHPDCGRVQDPYSIRCVPQVMGACLDNLSHAARVLQIEANAASDNPLVFTDTGEVISGGNFHAEPVAFAADIIALALSEIGAISERRLALLLDTGLSGLPAFLIRDSGVNSGFMIAQVTAAALAAENQCLAHPSSVTSLPTSANQEDHVSMATYAARRLLDMARNTAVIVGIEAMAAAQGMEFDRSLKSSPLIEAQFAAIRGRVAFLEQDRYLAPDIEAMRLWASTSAWPAPLAACLPSFQ.

The segment at residues 146-148 is a cross-link (5-imidazolinone (Ala-Gly)); it reads ASG. Ser147 bears the 2,3-didehydroalanine (Ser) mark.

The protein belongs to the PAL/histidase family. Post-translationally, contains an active site 4-methylidene-imidazol-5-one (MIO), which is formed autocatalytically by cyclization and dehydration of residues Ala-Ser-Gly.

It is found in the cytoplasm. The enzyme catalyses L-histidine = trans-urocanate + NH4(+). The protein operates within amino-acid degradation; L-histidine degradation into L-glutamate; N-formimidoyl-L-glutamate from L-histidine: step 1/3. The sequence is that of Histidine ammonia-lyase from Paracidovorax citrulli (strain AAC00-1) (Acidovorax citrulli).